Consider the following 406-residue polypeptide: uncharacterized protein (406 aa).

It belongs to the glycosyltransferase group 1 family. Glycosyltransferase 4 subfamily.

This is an uncharacterized protein from Methanocaldococcus jannaschii (strain ATCC 43067 / DSM 2661 / JAL-1 / JCM 10045 / NBRC 100440) (Methanococcus jannaschii).